The primary structure comprises 335 residues: MTEVYDFDRSSWDTKGSLAPILPTTYPDGRLIPQVRVIDPGLGDRKDECFMYIFLLGIIEDNDDLGPPIGRSFGSLPLGVGRTAARPEELLKEATLLDIVVRRTASVKEQLVFYNNTPLHVLTPWRKVLTNGSVFSANQVCNAVNLIPLDTAQRFRVVYMSITRLSDDGCYRIPRGMFDFRCKNALAFNILVTIQVEGDFCSNRGNLSMFKDQQATFMVHIGNFSRKKNQAYSADYCKLKIEKMGLVFALGGIGGTSLHIRCTGKMSKTLNAQLGFKKILCYPLMEINEDLNRMLWRLECKIVRIQAVLQPSVPQEFRIYNDVIISDDQGLFKIL.

The protein belongs to the morbillivirus/respirovirus/rubulavirus M protein family.

The protein localises to the virion. Its function is as follows. The M protein has a crucial role in virus assembly and interacts with the RNP complex as well as with the viral membrane. The protein is Matrix protein (M) of Phocine distemper virus (PDV).